The primary structure comprises 212 residues: Ras-related protein Rab-15 (212 aa).

Ser17, Gly18, Val19, Gly20, Lys21, Thr22, Cys23, Ser35, Ser39, and Thr40 together coordinate GTP. Thr22 provides a ligand contact to Mg(2+). 2 short sequence motifs (switch) span residues 31–45 (NEFH…GVDF) and 63–80 (DTAG…YYRR). Mg(2+)-binding residues include Thr40 and Asp63. GTP-binding residues include Gly66, Asn121, Lys122, Asp124, Ser151, and Ala152. Residues 193-212 (LEEEEGKPEGPANSSKTCWC) are disordered. S-geranylgeranyl cysteine attachment occurs at residues Cys210 and Cys212. Cys212 is subject to Cysteine methyl ester.

Belongs to the small GTPase superfamily. Rab family. As to quaternary structure, the GTP bound form of RAB15 interacts with REP15. Interacts (GTP-bound form) with MICAL1, MICAL3, MICALCL, EHBP1 and EHBP1L1. Mg(2+) is required as a cofactor.

The protein resides in the cell membrane. It carries out the reaction GTP + H2O = GDP + phosphate + H(+). Regulated by guanine nucleotide exchange factors (GEFs) which promote the exchange of bound GDP for free GTP. Regulated by GTPase activating proteins (GAPs) which increase the GTP hydrolysis activity. Inhibited by GDP dissociation inhibitors (GDIs). Functionally, the small GTPases Rab are key regulators of intracellular membrane trafficking, from the formation of transport vesicles to their fusion with membranes. Rabs cycle between an inactive GDP-bound form and an active GTP-bound form that is able to recruit to membranes different sets of downstream effectors directly responsible for vesicle formation, movement, tethering and fusion. RAB15 may act in concert with RAB3A in regulating aspects of synaptic vesicle membrane flow within the nerve terminal. This is Ras-related protein Rab-15 from Homo sapiens (Human).